Here is a 156-residue protein sequence, read N- to C-terminus: Ribosome maturation factor RimP (156 aa).

It belongs to the RimP family.

It localises to the cytoplasm. Functionally, required for maturation of 30S ribosomal subunits. The polypeptide is Ribosome maturation factor RimP (Lysinibacillus sphaericus (strain C3-41)).